We begin with the raw amino-acid sequence, 356 residues long: Probable dual-specificity RNA methyltransferase RlmN (356 aa).

Glu-100 (proton acceptor) is an active-site residue. The region spanning 106–340 (TQQRLTVCLS…VSLRASRGLD (235 aa)) is the Radical SAM core domain. A disulfide bridge connects residues Cys-113 and Cys-345. 3 residues coordinate [4Fe-4S] cluster: Cys-120, Cys-124, and Cys-127. S-adenosyl-L-methionine-binding positions include 167–168 (GE), Ser-197, 226–228 (SLH), and Asn-302. Cys-345 functions as the S-methylcysteine intermediate in the catalytic mechanism.

Belongs to the radical SAM superfamily. RlmN family. It depends on [4Fe-4S] cluster as a cofactor.

Its subcellular location is the cytoplasm. It carries out the reaction adenosine(2503) in 23S rRNA + 2 reduced [2Fe-2S]-[ferredoxin] + 2 S-adenosyl-L-methionine = 2-methyladenosine(2503) in 23S rRNA + 5'-deoxyadenosine + L-methionine + 2 oxidized [2Fe-2S]-[ferredoxin] + S-adenosyl-L-homocysteine. The enzyme catalyses adenosine(37) in tRNA + 2 reduced [2Fe-2S]-[ferredoxin] + 2 S-adenosyl-L-methionine = 2-methyladenosine(37) in tRNA + 5'-deoxyadenosine + L-methionine + 2 oxidized [2Fe-2S]-[ferredoxin] + S-adenosyl-L-homocysteine. In terms of biological role, specifically methylates position 2 of adenine 2503 in 23S rRNA and position 2 of adenine 37 in tRNAs. This Prochlorococcus marinus (strain MIT 9303) protein is Probable dual-specificity RNA methyltransferase RlmN.